A 397-amino-acid polypeptide reads, in one-letter code: Plasma membrane iron permease (397 aa).

4 helical membrane passes run 61–81, 92–112, 177–197, and 292–312; these read FTAL…FYAL, IWEG…GFAM, AFPL…YFIY, and GSIL…FLMW. Serine 337 and serine 338 each carry phosphoserine. Residues 337 to 346 show a composition bias toward polar residues; it reads SSHTPVQSSS. Residues 337–364 form a disordered region; it reads SSHTPVQSSSSEDEFKINSPTDDKGDKA. Threonine 340 bears the Phosphothreonine mark. 3 positions are modified to phosphoserine: serine 346, serine 347, and serine 355. Basic and acidic residues predominate over residues 349–364; the sequence is DEFKINSPTDDKGDKA. Threonine 357 is modified (phosphothreonine). Residues serine 374, serine 375, and serine 376 each carry the phosphoserine modification.

This sequence belongs to the oxidase-dependent Fe transporter (OFeT) (TC 9.A.10.1) family.

It is found in the membrane. In terms of biological role, permease for high affinity iron uptake. This is Plasma membrane iron permease (fip1) from Schizosaccharomyces pombe (strain 972 / ATCC 24843) (Fission yeast).